We begin with the raw amino-acid sequence, 1722 residues long: Signal-induced proliferation-associated 1-like protein 2 (1722 aa).

Disordered regions lie at residues 1-29 (MSDPRPSQAEKHKLGRAASKFKDPSRAMQ) and 45-73 (MGPATLNTSSLSEGGGGGGGPANGTPAVP). Residues 57 to 66 (EGGGGGGGPA) show a composition bias toward gly residues. A phosphoserine mark is found at Ser149, Ser380, and Ser384. The disordered stretch occupies residues 362–404 (ASAASQTPVPVGPAGGCESPLGSKEDLNAKENPDADEGDGKSN). Residues 384–403 (SKEDLNAKENPDADEGDGKS) show a composition bias toward basic and acidic residues. Residues 596–813 (LLKLDEQGLS…RTRHEYLKDL (218 aa)) form the Rap-GAP domain. The PDZ domain maps to 951–1027 (EMTLRRNGLG…VKVVIIQPHE (77 aa)). The residue at position 1030 (Ser1030) is a Phosphoserine. Disordered regions lie at residues 1068 to 1172 (HRVP…DHED), 1197 to 1246 (ERAL…FGSG), and 1328 to 1361 (AADGSMGDLSEVSSHSSGSHRSGSPSTHCSKSTG). 2 stretches are compositionally biased toward low complexity: residues 1091-1103 (LQCQPLLQQAQAA) and 1120-1131 (SSPSNQSSSSDP). Residues 1197–1218 (ERALQKDGSCKDSPNKLSHIGD) show a composition bias toward basic and acidic residues. Positions 1220-1237 (SCSSHSSSNTLSSNTSSN) are enriched in low complexity. Position 1245 is a phosphoserine (Ser1245). Residues 1328–1355 (AADGSMGDLSEVSSHSSGSHRSGSPSTH) show a composition bias toward low complexity. 7 positions are modified to phosphoserine: Ser1461, Ser1472, Ser1478, Ser1488, Ser1549, Ser1552, and Ser1591. The stretch at 1652-1712 (STLTGKVNQL…ATAQLRTFTE (61 aa)) forms a coiled coil.

The protein is Signal-induced proliferation-associated 1-like protein 2 (Sipa1l2) of Rattus norvegicus (Rat).